Consider the following 359-residue polypeptide: UPF0283 membrane protein RHECIAT_CH0002430 (359 aa).

The disordered stretch occupies residues 1-50; the sequence is MSKPPSDPPRRPPAAFAYEDEASEPRNSGRQQQGRRKPESFSENIVVTPD. 2 helical membrane-spanning segments follow: residues 77 to 97 and 111 to 131; these read FGKIAAGAFGILLSLGLGLWT and LGYAALGVLAIGILAVLALVI.

The protein belongs to the UPF0283 family.

The protein resides in the cell inner membrane. The protein is UPF0283 membrane protein RHECIAT_CH0002430 of Rhizobium etli (strain CIAT 652).